The sequence spans 156 residues: Ribosomal RNA large subunit methyltransferase H (156 aa).

S-adenosyl-L-methionine contacts are provided by residues L73, G104, and 123–128 (IGPLTL).

Belongs to the RNA methyltransferase RlmH family. In terms of assembly, homodimer.

It localises to the cytoplasm. The enzyme catalyses pseudouridine(1915) in 23S rRNA + S-adenosyl-L-methionine = N(3)-methylpseudouridine(1915) in 23S rRNA + S-adenosyl-L-homocysteine + H(+). Functionally, specifically methylates the pseudouridine at position 1915 (m3Psi1915) in 23S rRNA. This is Ribosomal RNA large subunit methyltransferase H from Xanthomonas campestris pv. campestris (strain 8004).